The sequence spans 37 residues: Large ribosomal subunit protein bL36 (37 aa).

Belongs to the bacterial ribosomal protein bL36 family.

This is Large ribosomal subunit protein bL36 from Histophilus somni (strain 129Pt) (Haemophilus somnus).